The primary structure comprises 310 residues: D-alanine--D-alanine ligase (310 aa).

The region spanning 104 to 305 is the ATP-grasp domain; the sequence is KRLFHSEGLP…MPQLAERILQ (202 aa). An ATP-binding site is contributed by 135–190; sequence LGDFHGAAFVKPLDSGSSVGISRAVGKDELIRGVAKALSVSHRCMVERAIEGRELT. The Mg(2+) site is built by D259, E272, and N274.

The protein belongs to the D-alanine--D-alanine ligase family. The cofactor is Mg(2+). Mn(2+) is required as a cofactor.

It localises to the cytoplasm. The enzyme catalyses 2 D-alanine + ATP = D-alanyl-D-alanine + ADP + phosphate + H(+). It functions in the pathway cell wall biogenesis; peptidoglycan biosynthesis. Its function is as follows. Cell wall formation. This Magnetococcus marinus (strain ATCC BAA-1437 / JCM 17883 / MC-1) protein is D-alanine--D-alanine ligase.